Reading from the N-terminus, the 781-residue chain is Protein argonaute (781 aa).

Residues 110–194 (SMNELLTERR…RHNDYCNSVM (85 aa)) enclose the PAZ domain. The 325-residue stretch at 436-760 (LVVIVIPGPK…LSKFCGEVLR (325 aa)) folds into the Piwi domain.

The protein belongs to the argonaute family. Ago subfamily. As to quaternary structure, interacts with miR2. Highly specific binding to the mRNA m7G-cap. May be a component of the RNA-induced silencing complex (RISC), a sequence-specific, multicomponent nuclease that destroys or silences messenger RNAs homologous to the silencing trigger.

It is found in the cytoplasm. Plays an essential role in growth and, with Dicer, also involved in microRNA (miRNA)-mediated translational repression. The RNA interference pathway is implicated in antigenic variation having a role in regulation of variant-specific surface protein (VSP)-coding gene expression. Several VSP genes are transcribed but only transcripts encoding the VSP to be expressed accumulate. Antisense RNAs corresponding to the silenced VSP genes are detected. The polypeptide is Protein argonaute (Giardia intestinalis (Giardia lamblia)).